The sequence spans 269 residues: Polyamine aminopropyltransferase (269 aa).

The region spanning 1–226 is the PABS domain; it reads MVWFFEYYDG…ALWSFIIGGE (226 aa). Residue Gln28 participates in S-methyl-5'-thioadenosine binding. Spermidine-binding residues include His59 and Asp83. S-methyl-5'-thioadenosine is bound by residues Asp102 and 133–134; that span reads DG. The Proton acceptor role is filled by Asp150. 150-153 is a spermidine binding site; it reads DSTD.

Belongs to the spermidine/spermine synthase family. As to quaternary structure, homodimer or homotetramer.

Its subcellular location is the cytoplasm. It catalyses the reaction S-adenosyl 3-(methylsulfanyl)propylamine + putrescine = S-methyl-5'-thioadenosine + spermidine + H(+). Its pathway is amine and polyamine biosynthesis; spermidine biosynthesis; spermidine from putrescine: step 1/1. Functionally, catalyzes the irreversible transfer of a propylamine group from the amino donor S-adenosylmethioninamine (decarboxy-AdoMet) to putrescine (1,4-diaminobutane) to yield spermidine. The sequence is that of Polyamine aminopropyltransferase from Archaeoglobus fulgidus (strain ATCC 49558 / DSM 4304 / JCM 9628 / NBRC 100126 / VC-16).